The sequence spans 215 residues: dITP/XTP pyrophosphatase (215 aa).

13–18 (THNIGK) provides a ligand contact to substrate. Asp-74 acts as the Proton acceptor in catalysis. Residue Asp-74 coordinates Mg(2+). Substrate-binding positions include Ser-75, 163 to 166 (FGFD), Lys-186, and 199 to 200 (HR).

The protein belongs to the HAM1 NTPase family. In terms of assembly, homodimer. The cofactor is Mg(2+).

The enzyme catalyses XTP + H2O = XMP + diphosphate + H(+). It carries out the reaction dITP + H2O = dIMP + diphosphate + H(+). The catalysed reaction is ITP + H2O = IMP + diphosphate + H(+). In terms of biological role, pyrophosphatase that catalyzes the hydrolysis of nucleoside triphosphates to their monophosphate derivatives, with a high preference for the non-canonical purine nucleotides XTP (xanthosine triphosphate), dITP (deoxyinosine triphosphate) and ITP. Seems to function as a house-cleaning enzyme that removes non-canonical purine nucleotides from the nucleotide pool, thus preventing their incorporation into DNA/RNA and avoiding chromosomal lesions. This chain is dITP/XTP pyrophosphatase, found in Bartonella henselae (strain ATCC 49882 / DSM 28221 / CCUG 30454 / Houston 1) (Rochalimaea henselae).